We begin with the raw amino-acid sequence, 385 residues long: GTP cyclohydrolase 1 type 2 homolog (385 aa).

His-64, His-65, Asp-103, His-333, and Glu-337 together coordinate a divalent metal cation.

Belongs to the GTP cyclohydrolase I type 2/NIF3 family. Homohexamer.

The polypeptide is GTP cyclohydrolase 1 type 2 homolog (Mycobacterium leprae (strain TN)).